The sequence spans 72 residues: MAKEDSIEMQGTILETLPNTMFRVELENGHVVIAHISGKMRKNYIRILTGDKVTVALTPYDLSKGRIVFRSR.

Residues 1 to 72 form the S1-like domain; sequence MAKEDSIEMQ…SKGRIVFRSR (72 aa).

This sequence belongs to the IF-1 family. In terms of assembly, component of the 30S ribosomal translation pre-initiation complex which assembles on the 30S ribosome in the order IF-2 and IF-3, IF-1 and N-formylmethionyl-tRNA(fMet); mRNA recruitment can occur at any time during PIC assembly.

It localises to the cytoplasm. Functionally, one of the essential components for the initiation of protein synthesis. Stabilizes the binding of IF-2 and IF-3 on the 30S subunit to which N-formylmethionyl-tRNA(fMet) subsequently binds. Helps modulate mRNA selection, yielding the 30S pre-initiation complex (PIC). Upon addition of the 50S ribosomal subunit IF-1, IF-2 and IF-3 are released leaving the mature 70S translation initiation complex. The chain is Translation initiation factor IF-1 from Aeromonas hydrophila subsp. hydrophila (strain ATCC 7966 / DSM 30187 / BCRC 13018 / CCUG 14551 / JCM 1027 / KCTC 2358 / NCIMB 9240 / NCTC 8049).